A 296-amino-acid polypeptide reads, in one-letter code: Polyamine aminopropyltransferase (296 aa).

The 234-residue stretch at 5–238 (ELWYETLHAN…GIMTFAWATQ (234 aa)) folds into the PABS domain. Q33 contributes to the S-methyl-5'-thioadenosine binding site. Spermidine-binding residues include H64 and D88. Residues E108 and 140-141 (DG) each bind S-methyl-5'-thioadenosine. The active-site Proton acceptor is D158. 158 to 161 (DCTD) serves as a coordination point for spermidine. Residue P165 coordinates S-methyl-5'-thioadenosine.

This sequence belongs to the spermidine/spermine synthase family. Homodimer or homotetramer.

It localises to the cytoplasm. The catalysed reaction is S-adenosyl 3-(methylsulfanyl)propylamine + putrescine = S-methyl-5'-thioadenosine + spermidine + H(+). The protein operates within amine and polyamine biosynthesis; spermidine biosynthesis; spermidine from putrescine: step 1/1. Its function is as follows. Catalyzes the irreversible transfer of a propylamine group from the amino donor S-adenosylmethioninamine (decarboxy-AdoMet) to putrescine (1,4-diaminobutane) to yield spermidine. This Yersinia pestis bv. Antiqua (strain Antiqua) protein is Polyamine aminopropyltransferase.